The primary structure comprises 383 residues: 3-ketosteroid-9-alpha-monooxygenase, oxygenase component (383 aa).

A Rieske domain is found at 24-126 (WHCLGPVKNF…TDVRGGLLFV (103 aa)). Residues cysteine 65, histidine 67, cysteine 84, and histidine 87 each contribute to the [2Fe-2S] cluster site. Fe cation contacts are provided by asparagine 173, histidine 179, histidine 184, and aspartate 302.

Homotrimer. The two-component system 3-ketosteroid-9-alpha-monooxygenase is composed of an oxygenase component KshA and a reductase component KshB. Requires [2Fe-2S] cluster as cofactor. It depends on Fe cation as a cofactor.

It carries out the reaction androsta-1,4-diene-3,17-dione + 2 reduced [2Fe-2S]-[ferredoxin] + O2 + 2 H(+) = 9alpha-hydroxyandrosta-1,4-diene-3,17-dione + 2 oxidized [2Fe-2S]-[ferredoxin] + H2O. The protein operates within lipid metabolism; steroid biosynthesis. Functionally, involved in the degradation of cholesterol. Catalyzes the introduction of a 9a-hydroxyl moiety into 1,4-androstadiene-3,17-dione (ADD) to yield the 9alpha-hydroxy-1,4-androstadiene-3,17-dione (9OHADD) intermediate which spontaneously form 3-hydroxy-9,10-seconandrost-1,3,5(10)-triene-9,17-dione (HSA) via the meta-cleavage of ring B with concomitant aromatization of ring A. The chain is 3-ketosteroid-9-alpha-monooxygenase, oxygenase component (kshA) from Mycolicibacterium smegmatis (strain ATCC 700084 / mc(2)155) (Mycobacterium smegmatis).